A 329-amino-acid chain; its full sequence is Beta-ketoacyl-[acyl-carrier-protein] synthase III (329 aa).

Active-site residues include C123 and H256. Positions 257 to 261 (QANVR) are ACP-binding. Residue N286 is part of the active site.

This sequence belongs to the thiolase-like superfamily. FabH family. As to quaternary structure, homodimer.

Its subcellular location is the cytoplasm. The catalysed reaction is malonyl-[ACP] + acetyl-CoA + H(+) = 3-oxobutanoyl-[ACP] + CO2 + CoA. It functions in the pathway lipid metabolism; fatty acid biosynthesis. Its function is as follows. Catalyzes the condensation reaction of fatty acid synthesis by the addition to an acyl acceptor of two carbons from malonyl-ACP. Catalyzes the first condensation reaction which initiates fatty acid synthesis and may therefore play a role in governing the total rate of fatty acid production. Possesses both acetoacetyl-ACP synthase and acetyl transacylase activities. Its substrate specificity determines the biosynthesis of branched-chain and/or straight-chain of fatty acids. The chain is Beta-ketoacyl-[acyl-carrier-protein] synthase III from Bordetella parapertussis (strain 12822 / ATCC BAA-587 / NCTC 13253).